The sequence spans 155 residues: MRCPKCDHNGTRVLDSRPVQDHYSIRRRRECEKCGYRFTTFETVEQTPLIIVKKDGNREEFSREKVLRGIIRACEKRPVTLEQLEGVVTKVEQQLRALAQSEIPSEQVGELVMNELARVDEVAYVRFASVYRQFKDITVFFKELEDLMKQENSTN.

The segment at 3 to 34 (CPKCDHNGTRVLDSRPVQDHYSIRRRRECEKC) is a zinc-finger region. One can recognise an ATP-cone domain in the interval 49–139 (LIIVKKDGNR…VYRQFKDITV (91 aa)).

Belongs to the NrdR family. It depends on Zn(2+) as a cofactor.

Negatively regulates transcription of bacterial ribonucleotide reductase nrd genes and operons by binding to NrdR-boxes. The protein is Transcriptional repressor NrdR of Exiguobacterium sp. (strain ATCC BAA-1283 / AT1b).